The following is an 882-amino-acid chain: Alanine--tRNA ligase (882 aa).

Zn(2+) is bound by residues His-570, His-574, Cys-672, and His-676.

It belongs to the class-II aminoacyl-tRNA synthetase family. The cofactor is Zn(2+).

It localises to the cytoplasm. The enzyme catalyses tRNA(Ala) + L-alanine + ATP = L-alanyl-tRNA(Ala) + AMP + diphosphate. Functionally, catalyzes the attachment of alanine to tRNA(Ala) in a two-step reaction: alanine is first activated by ATP to form Ala-AMP and then transferred to the acceptor end of tRNA(Ala). Also edits incorrectly charged Ser-tRNA(Ala) and Gly-tRNA(Ala) via its editing domain. The sequence is that of Alanine--tRNA ligase from Xanthomonas oryzae pv. oryzae (strain MAFF 311018).